The sequence spans 43 residues: Gene 67 protein (43 aa).

The chain is Gene 67 protein (67) from Mycobacterium phage L5 (Mycobacteriophage L5).